Consider the following 578-residue polypeptide: Raftlin (578 aa).

Residue Gly-2 is the site of N-myristoyl glycine attachment. Cys-3 carries S-palmitoyl cysteine lipidation. The segment covering 169 to 184 has biased composition (polar residues); that stretch reads VNSAGSSAPVSTANST. Disordered stretches follow at residues 169 to 271, 449 to 525, and 551 to 578; these read VNSA…VHEE, FSRE…PGGL, and CTGH…VEEN. A phosphoserine mark is found at Ser-183, Ser-199, and Ser-220. Positions 185–206 are enriched in basic and acidic residues; it reads EDARDAKNARGDHASLENEKPG. The segment covering 457–466 has biased composition (basic residues); that stretch reads RQMRKSKGKL. The span at 467–485 shows a compositional bias: basic and acidic residues; it reads SARDKQQAEENEKNLEDQS. Phosphoserine is present on Ser-505. Composition is skewed to basic and acidic residues over residues 506 to 518 and 557 to 578; these read EEMK…DKGE and PGED…VEEN.

Belongs to the raftlin family. In terms of assembly, interacts with TLR4; the interaction occurs in response to lipopolysaccharide stimulation. Interacts with CLTC; the interaction occurs in response to pathogens. Interacts with AP2A1 and AP2B1. Expressed in B-cells (at protein level). Expressed in dendritic cells and macrophages.

It localises to the cell membrane. It is found in the cytoplasm. The protein localises to the membrane raft. The protein resides in the endosome. Its subcellular location is the early endosome. Functionally, involved in protein trafficking via association with clathrin and AP2 complex. Upon bacterial lipopolysaccharide stimulation, mediates internalization of TLR4 to endosomes in dendritic cells and macrophages; and internalization of poly(I:C) to TLR3-positive endosomes in myeloid dendritic cells and epithelial cells; resulting in activation of TICAM1-mediated signaling and subsequent IFNB1 production. Involved in T-cell antigen receptor-mediated signaling by regulating tyrosine kinase LCK localization, T-cell dependent antibody production and cytokine secretion. May regulate B-cell antigen receptor-mediated signaling. May play a pivotal role in the formation and/or maintenance of lipid rafts. The chain is Raftlin (RFTN1) from Homo sapiens (Human).